Reading from the N-terminus, the 406-residue chain is Protein phosphatase 2C (406 aa).

In terms of domain architecture, PPM-type phosphatase spans 23 to 274 (RCGSNCVNGY…DNISCMIVQF (252 aa)). Mn(2+) is bound by residues Asp55, Gly56, Asp221, and Asp265.

The protein belongs to the PP2C family. Monomer. Mg(2+) serves as cofactor. Mn(2+) is required as a cofactor.

It catalyses the reaction O-phospho-L-seryl-[protein] + H2O = L-seryl-[protein] + phosphate. The enzyme catalyses O-phospho-L-threonyl-[protein] + H2O = L-threonyl-[protein] + phosphate. In terms of biological role, enzyme with a broad specificity. The sequence is that of Protein phosphatase 2C from Leishmania chagasi.